A 118-amino-acid polypeptide reads, in one-letter code: Nucleoid-associated protein TM_0687 (118 aa).

It belongs to the YbaB/EbfC family. As to quaternary structure, homodimer.

Its subcellular location is the cytoplasm. The protein localises to the nucleoid. Binds to DNA and alters its conformation. May be involved in regulation of gene expression, nucleoid organization and DNA protection. This chain is Nucleoid-associated protein TM_0687, found in Thermotoga maritima (strain ATCC 43589 / DSM 3109 / JCM 10099 / NBRC 100826 / MSB8).